Here is a 542-residue protein sequence, read N- to C-terminus: Signal peptide peptidase-like 5 (542 aa).

Residues 1-23 (MAAATAAVFALLMASALAGAAAG) form the signal peptide. Residues 24-192 (GDIVHHDDEA…PDRPVVDTAE (169 aa)) lie on the Lumenal side of the membrane. N-linked (GlcNAc...) asparagine glycosylation is found at asparagine 79 and asparagine 145. The region spanning 92-167 (CTSPKEKVSG…LPRDAGFALH (76 aa)) is the PA domain. Residues 193 to 213 (VFLWLMAVGTVLCASYWSAWS) form a helical membrane-spanning segment. At 214–245 (AREALCEQEKLLKDGREVLLNVENGSSSGMID) the chain is on the cytoplasmic side. The chain crosses the membrane as a helical span at residues 246 to 266 (INVASAIMFVVVASCFLIMLY). At 267–275 (KMMSSWFVE) the chain is on the lumenal side. A helical transmembrane segment spans residues 276-296 (LLVVIFCVGGVEGLQTCLVAL). The Cytoplasmic segment spans residues 297 to 316 (LSRWFRAASESFFKVPFFGA). Residues 317-337 (VSYLTLAVSPFCIVFAVLWAV) form a helical membrane-spanning segment. The Lumenal portion of the chain corresponds to 338–342 (HRHFT). The chain crosses the membrane as a helical span at residues 343–363 (YAWIGQDILGIALIITVIQIV). Over 364 to 367 (RVPN) the chain is Cytoplasmic. Residues 368–388 (LKVGSVLLSCAFFYDIFWVFV) form a helical membrane-spanning segment. Residue aspartate 382 is part of the active site. Residues 389-426 (SKRWFHESVMIVVARGDKTDEDGVPMLLKIPRMFDPWG) lie on the Lumenal side of the membrane. The helical transmembrane segment at 427-447 (GYSIIGFGDILLPGLLVAFAL) threads the bilayer. The active site involves aspartate 435. Topologically, residues 448-459 (RYDWAAKKSLQT) are cytoplasmic. A helical membrane pass occupies residues 460–480 (GYFLWSMVAYGSGLLITYVAL). Over 481-486 (NLMDGH) the chain is Lumenal. Residues 487-507 (GQPALLYIVPFTLGALISLGW) form a helical membrane-spanning segment. The short motif at 489–491 (PAL) is the PAL element. Topologically, residues 508–542 (KRGELWNLWSKGEPERVCPHHMHMQPQPKTPPLVQ) are cytoplasmic.

This sequence belongs to the peptidase A22B family. In terms of processing, glycosylated.

It localises to the endosome membrane. In terms of biological role, intramembrane-cleaving aspartic protease (I-CLiP) that cleaves type II membrane signal peptides in the hydrophobic plane of the membrane. The polypeptide is Signal peptide peptidase-like 5 (SPPL5) (Oryza sativa subsp. japonica (Rice)).